We begin with the raw amino-acid sequence, 246 residues long: 3-deoxy-manno-octulosonate cytidylyltransferase (246 aa).

The protein belongs to the KdsB family.

The protein resides in the cytoplasm. It carries out the reaction 3-deoxy-alpha-D-manno-oct-2-ulosonate + CTP = CMP-3-deoxy-beta-D-manno-octulosonate + diphosphate. It participates in nucleotide-sugar biosynthesis; CMP-3-deoxy-D-manno-octulosonate biosynthesis; CMP-3-deoxy-D-manno-octulosonate from 3-deoxy-D-manno-octulosonate and CTP: step 1/1. Its pathway is bacterial outer membrane biogenesis; lipopolysaccharide biosynthesis. Activates KDO (a required 8-carbon sugar) for incorporation into bacterial lipopolysaccharide in Gram-negative bacteria. The chain is 3-deoxy-manno-octulosonate cytidylyltransferase from Rickettsia massiliae (strain Mtu5).